A 230-amino-acid polypeptide reads, in one-letter code: Cytochrome c oxidase subunit 2 (230 aa).

The Mitochondrial intermembrane portion of the chain corresponds to 1–14 (MAHPSQLGFQDAAS). A helical transmembrane segment spans residues 15 to 45 (PVMEELLHFHDHALMIVFLISTLVLYIIAAT). Residues 46 to 59 (ASTKLTDKYILDSQ) lie on the Mitochondrial matrix side of the membrane. Residues 60–87 (EIEVIWTIMPAVILILIALPSLRILYLM) traverse the membrane as a helical segment. Residues 88 to 230 (DEINDPHLTV…NWSSLMLEDA (143 aa)) lie on the Mitochondrial intermembrane side of the membrane. Residues His-161, Cys-196, Glu-198, Cys-200, His-204, and Met-207 each contribute to the Cu cation site. Glu-198 is a Mg(2+) binding site.

Belongs to the cytochrome c oxidase subunit 2 family. In terms of assembly, component of the cytochrome c oxidase (complex IV, CIV), a multisubunit enzyme composed of 14 subunits. The complex is composed of a catalytic core of 3 subunits MT-CO1, MT-CO2 and MT-CO3, encoded in the mitochondrial DNA, and 11 supernumerary subunits COX4I, COX5A, COX5B, COX6A, COX6B, COX6C, COX7A, COX7B, COX7C, COX8 and NDUFA4, which are encoded in the nuclear genome. The complex exists as a monomer or a dimer and forms supercomplexes (SCs) in the inner mitochondrial membrane with NADH-ubiquinone oxidoreductase (complex I, CI) and ubiquinol-cytochrome c oxidoreductase (cytochrome b-c1 complex, complex III, CIII), resulting in different assemblies (supercomplex SCI(1)III(2)IV(1) and megacomplex MCI(2)III(2)IV(2)). Found in a complex with TMEM177, COA6, COX18, COX20, SCO1 and SCO2. Interacts with TMEM177 in a COX20-dependent manner. Interacts with COX20. Interacts with COX16. The cofactor is Cu cation.

The protein localises to the mitochondrion inner membrane. The enzyme catalyses 4 Fe(II)-[cytochrome c] + O2 + 8 H(+)(in) = 4 Fe(III)-[cytochrome c] + 2 H2O + 4 H(+)(out). Component of the cytochrome c oxidase, the last enzyme in the mitochondrial electron transport chain which drives oxidative phosphorylation. The respiratory chain contains 3 multisubunit complexes succinate dehydrogenase (complex II, CII), ubiquinol-cytochrome c oxidoreductase (cytochrome b-c1 complex, complex III, CIII) and cytochrome c oxidase (complex IV, CIV), that cooperate to transfer electrons derived from NADH and succinate to molecular oxygen, creating an electrochemical gradient over the inner membrane that drives transmembrane transport and the ATP synthase. Cytochrome c oxidase is the component of the respiratory chain that catalyzes the reduction of oxygen to water. Electrons originating from reduced cytochrome c in the intermembrane space (IMS) are transferred via the dinuclear copper A center (CU(A)) of subunit 2 and heme A of subunit 1 to the active site in subunit 1, a binuclear center (BNC) formed by heme A3 and copper B (CU(B)). The BNC reduces molecular oxygen to 2 water molecules using 4 electrons from cytochrome c in the IMS and 4 protons from the mitochondrial matrix. This chain is Cytochrome c oxidase subunit 2 (mt-co2), found in Tetraodon nigroviridis (Spotted green pufferfish).